We begin with the raw amino-acid sequence, 571 residues long: Leucine aminopeptidase A2, chloroplastic (571 aa).

Residues 1–42 (MATLRVSSLFASSSSSLHSNPSVFTKYQSSPKWAFSFPVTPL) constitute a chloroplast transit peptide. Mg(2+) is bound by residues Lys-342 and Asp-347. Residue Lys-354 is part of the active site. Positions 367, 427, and 429 each coordinate Mg(2+). The active site involves Arg-431.

This sequence belongs to the peptidase M17 family. In terms of assembly, homohexamer (dimer of homotrimers). The cofactor is Mg(2+). Expressed during floral development. Expressed in healthy and senescent leaves, cotyledons (emergence from seed coats), pistils, sepals, petals, stamens, and floral buds (at protein level).

The protein localises to the plastid. Its subcellular location is the chloroplast. The enzyme catalyses Release of an N-terminal amino acid, Xaa-|-Yaa-, in which Xaa is preferably Leu, but may be other amino acids including Pro although not Arg or Lys, and Yaa may be Pro. Amino acid amides and methyl esters are also readily hydrolyzed, but rates on arylamides are exceedingly low.. It catalyses the reaction Release of N-terminal proline from a peptide.. Catalyzes the removal of unsubstituted N-terminal amino acids from various peptides. When associated as homohexamer, catalyzes the proteolyzes of Xaa-Leu dipeptides. Possesses leucine aminopeptidase activity against the model substrate leucine-amido methyl coumarin. Presumably involved in the processing and regular turnover of intracellular proteins. Regulates wound signaling and has a role in insect defense. Functionally, functions as a molecular chaperone to protect proteins from heat-induced damage. This is Leucine aminopeptidase A2, chloroplastic from Solanum lycopersicum (Tomato).